A 275-amino-acid polypeptide reads, in one-letter code: 2-dehydro-3-deoxyphosphooctonate aldolase (275 aa).

It belongs to the KdsA family.

It localises to the cytoplasm. It catalyses the reaction D-arabinose 5-phosphate + phosphoenolpyruvate + H2O = 3-deoxy-alpha-D-manno-2-octulosonate-8-phosphate + phosphate. It functions in the pathway carbohydrate biosynthesis; 3-deoxy-D-manno-octulosonate biosynthesis; 3-deoxy-D-manno-octulosonate from D-ribulose 5-phosphate: step 2/3. Its pathway is bacterial outer membrane biogenesis; lipopolysaccharide biosynthesis. The protein is 2-dehydro-3-deoxyphosphooctonate aldolase of Francisella tularensis subsp. mediasiatica (strain FSC147).